The following is a 321-amino-acid chain: Protein stand still (321 aa).

Coiled coils occupy residues 74–103 and 147–167; these read KLHE…RKKA and KQEQ…KANL. The segment covering 146–162 has biased composition (basic and acidic residues); the sequence is HKQEQEGATRKLEDSTS. Disordered regions lie at residues 146–166 and 227–248; these read HKQE…DKAN and QVPP…MEDV. Over residues 235-244 the composition is skewed to low complexity; it reads SKSSGSLASS. Residues 272 to 292 adopt a coiled-coil conformation; it reads QRDVLQRLERSMAQISQELHC.

As to expression, germ cells specific. Expressed in all germ cells. During the first instar larvae, it is expressed in all germ cells of both sexes. In third instar larvae, it decreases in male germ cells while it remains in female germ cells. In adult ovary, it is expressed in cells of the germarium, including the stem cells. In the early previtellogenic stages, it is highly expressed in the nurse cells. During vitellogenesis, it is not translocated into the maturing egg. In testes, it is only expressed during some steps of male germline differentiation. At the apex testis, it is expressed at low level in stem cells and dividing spermatogonia, while in newly formed 16-cell cysts of primary spermatocytes, it is transiently but strongly expressed before vanishing during spermatocyte growth phase.

It localises to the nucleus. Its function is as follows. Essential in the female germline for proper survival, sex determination and differentiation. Participates in the transcriptional activation of Otu. Does not regulate the expression of Ovo. This chain is Protein stand still (stil), found in Drosophila melanogaster (Fruit fly).